The chain runs to 89 residues: Snake venom serine protease rhinocerase (89 aa).

In terms of domain architecture, Peptidase S1 spans 1–89 (VIGGAECDIN…KVFDYIPWIK (89 aa)). Aspartate 45 serves as the catalytic Charge relay system. The cysteines at positions 64 and 69 are disulfide-linked.

It belongs to the peptidase S1 family. Snake venom subfamily. In terms of processing, glycosylated. As to expression, expressed by the venom gland.

The protein localises to the secreted. Inhibited by PMSF. Not inhibited by benzamidine. Functionally, snake venom serine protease that cleaves fibrinogen alpha and beta chains (FGA and FGB), but not gamma chains. Exhibits fibrinolytic and kininogenolytic. Preferentially cleaves after Arg and Lys residues. The protein is Snake venom serine protease rhinocerase of Bitis rhinoceros (West African gaboon viper).